The chain runs to 373 residues: MSGAVLLCLFFSINVGNIQWDLRYIPILLAFLYGGKRAGWGVAAIAVVGRIGQGGDLFLLGVVLIVLTALFYALCVNRFYMLPPRWSRIRYASLLVILPATIQTFGTLYLINYENHLSESWVAGWLYIVFLVVTVVLVTYLFETLLEKERIVAELVATEKDFTKGELAASIAHEVRNPLTVVKGFVQLLSEDKQHAEYHKLILSELDRAESIIYEFLNTTRPQTNATFHLNETAREVVALLTPYAQERSIQLTIGTCEQAIVNGNENKVKQALMNFVKNGIEASNEGDTVTIQLDRLKDRAQIEINDNGVGMSRQQLKQLGTAYFTTKESGNGIGTMVSIRIVEMMNGMVTFKSKPGKGTKVVLSLPIEKENE.

The next 4 helical transmembrane spans lie at 27–47 (ILLAFLYGGKRAGWGVAAIAV), 57–77 (LFLLGVVLIVLTALFYALCVN), 91–111 (YASLLVILPATIQTFGTLYLI), and 122–142 (VAGWLYIVFLVVTVVLVTYLF). Residues 170–370 (SIAHEVRNPL…KVVLSLPIEK (201 aa)) form the Histidine kinase domain. Residue histidine 173 is modified to Phosphohistidine; by autocatalysis.

The protein resides in the cell membrane. It catalyses the reaction ATP + protein L-histidine = ADP + protein N-phospho-L-histidine.. Involved in a sensory transduction pathway that enhances the production of minor proteases. The chain is Sensor protein DegM (degM) from Bacillus sp. (strain B21-2).